Reading from the N-terminus, the 879-residue chain is Leucine--tRNA ligase (879 aa).

Residues 43–53 carry the 'HIGH' region motif; the sequence is PYPSGRIHMGH. The short motif at 636–640 is the 'KMSKS' region element; it reads KMSKS. Lys639 contributes to the ATP binding site.

The protein belongs to the class-I aminoacyl-tRNA synthetase family.

It is found in the cytoplasm. It carries out the reaction tRNA(Leu) + L-leucine + ATP = L-leucyl-tRNA(Leu) + AMP + diphosphate. The chain is Leucine--tRNA ligase from Afipia carboxidovorans (strain ATCC 49405 / DSM 1227 / KCTC 32145 / OM5) (Oligotropha carboxidovorans).